The following is a 330-amino-acid chain: Phospholipase C (330 aa).

The signal sequence occupies residues 1–34 (MVKKTKSNSLKKVATLALANLLLVGALTDNSAKA). Cysteine 155 and cysteine 191 are joined by a disulfide.

This sequence belongs to the neutral sphingomyelinase family. In terms of assembly, monomer.

The protein resides in the secreted. It catalyses the reaction a 1,2-diacyl-sn-glycero-3-phosphocholine + H2O = phosphocholine + a 1,2-diacyl-sn-glycerol + H(+). Its function is as follows. Bacterial hemolysins are exotoxins that attack blood cell membranes and cause cell rupture. Beta-hemolysin is a phospholipase C with specific activity toward sphingomyelins. Has a high specificity for sphingomyelin, hydrolyzes lysophosphatidylcholine at a much lower rate, but has no activity towards phosphatidylcholine, phosphatidylethanolamine, or phosphatidylserine. The protein is Phospholipase C (hlb) of Staphylococcus aureus (strain NCTC 8325 / PS 47).